A 422-amino-acid polypeptide reads, in one-letter code: MLDINYIEQNLDEVIQRLNKRNQQDYSDDLKYVVSKNLKRKEILVKSEALKSRKNQLSKEIGTLLKEKKVDQSEQAKIEVINLNEQIIKLDEELRVVNDQILEKLLYIPNLPHKDIYFGKSDEDNVEIRKSNHSNLLKHSTPHWQIATKLGLVDFEKGVKLSGTRFLIYTGLGSKLVRSIADLLLKRHEKHGYKEIFCPLIVNKSAMLGTGQLPKFSEDMYQVGEQYLIPTSEVPLTNLHANEILAYDVLPLKYTSFTQCFRQEAGSAGRDTKGMIRLHQFNKVELVKIVHPEESMNELEMLIKDAEDVLNMFDLPYRVVELCSGDIGFSSAKTYDLEVWFPEQNKYREISSCSNCTDFQARNMQTRFKDKDSKIKLVHTLNGSGVAVDRLIAAILENYWDGEKLILPTLLRPYFDNQEFIK.

L-serine is bound at residue 231 to 233 (TSE). ATP is bound at residue 262 to 264 (RQE). An L-serine-binding site is contributed by Glu-285. 349 to 352 (EISS) is an ATP binding site. Ser-384 provides a ligand contact to L-serine.

This sequence belongs to the class-II aminoacyl-tRNA synthetase family. Type-1 seryl-tRNA synthetase subfamily. As to quaternary structure, homodimer. The tRNA molecule binds across the dimer.

It localises to the cytoplasm. It catalyses the reaction tRNA(Ser) + L-serine + ATP = L-seryl-tRNA(Ser) + AMP + diphosphate + H(+). It carries out the reaction tRNA(Sec) + L-serine + ATP = L-seryl-tRNA(Sec) + AMP + diphosphate + H(+). It functions in the pathway aminoacyl-tRNA biosynthesis; selenocysteinyl-tRNA(Sec) biosynthesis; L-seryl-tRNA(Sec) from L-serine and tRNA(Sec): step 1/1. Catalyzes the attachment of serine to tRNA(Ser). Is also able to aminoacylate tRNA(Sec) with serine, to form the misacylated tRNA L-seryl-tRNA(Sec), which will be further converted into selenocysteinyl-tRNA(Sec). This Mycoplasma capricolum subsp. capricolum (strain California kid / ATCC 27343 / NCTC 10154) protein is Serine--tRNA ligase.